Consider the following 363-residue polypeptide: uncharacterized protein (363 aa).

The disordered stretch occupies residues 35 to 262 (TVPGPPGAES…GLSPCCGDGG (228 aa)). Residues 56-75 (AVSSSRNPNSAGRTPNSYLT) are compositionally biased toward polar residues. Residues 100–116 (GADPALGSLPAAGLSGL) are compositionally biased toward low complexity.

This is an uncharacterized protein from Homo sapiens (Human).